A 484-amino-acid polypeptide reads, in one-letter code: tRNA sulfurtransferase (484 aa).

Positions 63–167 (REMIERLTCT…LDRLFVIHRQ (105 aa)) constitute a THUMP domain. Residues 185–186 (LM), Lys267, Gly289, and Gln298 each bind ATP. Cys346 and Cys457 are disulfide-bonded. The region spanning 405–483 (VLPGQIVIDI…GHTNVRVYRP (79 aa)) is the Rhodanese domain. The active-site Cysteine persulfide intermediate is Cys457.

It belongs to the ThiI family.

It is found in the cytoplasm. The enzyme catalyses [ThiI sulfur-carrier protein]-S-sulfanyl-L-cysteine + a uridine in tRNA + 2 reduced [2Fe-2S]-[ferredoxin] + ATP + H(+) = [ThiI sulfur-carrier protein]-L-cysteine + a 4-thiouridine in tRNA + 2 oxidized [2Fe-2S]-[ferredoxin] + AMP + diphosphate. It catalyses the reaction [ThiS sulfur-carrier protein]-C-terminal Gly-Gly-AMP + S-sulfanyl-L-cysteinyl-[cysteine desulfurase] + AH2 = [ThiS sulfur-carrier protein]-C-terminal-Gly-aminoethanethioate + L-cysteinyl-[cysteine desulfurase] + A + AMP + 2 H(+). It functions in the pathway cofactor biosynthesis; thiamine diphosphate biosynthesis. In terms of biological role, catalyzes the ATP-dependent transfer of a sulfur to tRNA to produce 4-thiouridine in position 8 of tRNAs, which functions as a near-UV photosensor. Also catalyzes the transfer of sulfur to the sulfur carrier protein ThiS, forming ThiS-thiocarboxylate. This is a step in the synthesis of thiazole, in the thiamine biosynthesis pathway. The sulfur is donated as persulfide by IscS. The protein is tRNA sulfurtransferase of Pseudomonas aeruginosa (strain UCBPP-PA14).